The following is a 493-amino-acid chain: MLELPIISISIFLPLISVLYILLFISQSKKADKAIYVMYVAVLSSVLTFISTIYILIEFDSSNPAYQFIERYAWLDKIGLEFHVGVDGISIFFVALTSFLTLICIIGSLFTVKKYIKEYLVCFLLMESFCIGAFTSVNLLLFYLFFEAILVPMYIIIGVWGGENRIYAALKFFLYTFFGSVFFLLSLIYIYSKIHNFDLTYIPELTGNIPLFTQQILWWAIFIAFAVKIPIIPFHTWLPDAHVQAPTSGSVILAGILLKFGGYGFLRVLLPLFSSVSQEFAIYVIYLSVIAIIYASLVALAQKDMKKMIAYSSIAHMGYVTIGIFSFTEAGVSGAIFQMLSHGVISSCLFLIVGTLYERLHTKEIAKYGGVASKMPVLATFFMIAMLGSVGLPGTSGFIGEFLSLLGIYKVNVIATFIAALGIILGAVYMLKLYKEVMLGEITNKEIMHFRDLYKYEIISIAPLILLIIYFGLMPSSILNVFRLSVESLLVKF.

A run of 14 helical transmembrane segments spans residues 5–25 (PIIS…LLFI), 37–57 (VMYV…YILI), 89–109 (ISIF…IGSL), 115–135 (YIKE…GAFT), 139–159 (LLLF…IIGV), 172–192 (FFLY…YIYS), 216–236 (ILWW…PFHT), 251–271 (VILA…VLLP), 280–300 (FAIY…LVAL), 308–328 (MIAY…FSFT), 334–354 (GAIF…LIVG), 375–395 (MPVL…LPGT), 411–431 (VNVI…VYML), and 458–478 (IISI…PSSI).

It belongs to the complex I subunit 4 family.

The protein resides in the cell membrane. The enzyme catalyses a quinone + NADH + 5 H(+)(in) = a quinol + NAD(+) + 4 H(+)(out). NDH-1 shuttles electrons from NADH, via FMN and iron-sulfur (Fe-S) centers, to quinones in the respiratory chain. Couples the redox reaction to proton translocation (for every two electrons transferred, four hydrogen ions are translocated across the cytoplasmic membrane), and thus conserves the redox energy in a proton gradient. The polypeptide is NADH-quinone oxidoreductase subunit M (nuoM) (Rickettsia felis (strain ATCC VR-1525 / URRWXCal2) (Rickettsia azadi)).